The sequence spans 273 residues: F-actin-capping protein subunit alpha (273 aa).

This sequence belongs to the F-actin-capping protein alpha subunit family. In terms of assembly, heterodimer of an alpha and a beta subunit.

Its subcellular location is the cytoplasm. The protein resides in the cytoskeleton. In terms of biological role, F-actin-capping proteins bind in a Ca(2+)-independent manner to the fast growing ends of actin filaments (barbed end) thereby blocking the exchange of subunits at these ends. Unlike other capping proteins (such as gelsolin and severin), these proteins do not sever actin filaments. This is F-actin-capping protein subunit alpha (cap1) from Emericella nidulans (strain FGSC A4 / ATCC 38163 / CBS 112.46 / NRRL 194 / M139) (Aspergillus nidulans).